Consider the following 188-residue polypeptide: Elongation factor P (188 aa).

This sequence belongs to the elongation factor P family.

The protein localises to the cytoplasm. The protein operates within protein biosynthesis; polypeptide chain elongation. In terms of biological role, involved in peptide bond synthesis. Stimulates efficient translation and peptide-bond synthesis on native or reconstituted 70S ribosomes in vitro. Probably functions indirectly by altering the affinity of the ribosome for aminoacyl-tRNA, thus increasing their reactivity as acceptors for peptidyl transferase. The sequence is that of Elongation factor P from Christiangramia forsetii (strain DSM 17595 / CGMCC 1.15422 / KT0803) (Gramella forsetii).